A 332-amino-acid polypeptide reads, in one-letter code: Phosphate acyltransferase (332 aa).

This sequence belongs to the PlsX family. As to quaternary structure, homodimer. Probably interacts with PlsY.

It is found in the cytoplasm. It carries out the reaction a fatty acyl-[ACP] + phosphate = an acyl phosphate + holo-[ACP]. The protein operates within lipid metabolism; phospholipid metabolism. Its function is as follows. Catalyzes the reversible formation of acyl-phosphate (acyl-PO(4)) from acyl-[acyl-carrier-protein] (acyl-ACP). This enzyme utilizes acyl-ACP as fatty acyl donor, but not acyl-CoA. The protein is Phosphate acyltransferase of Bacillus pumilus (strain SAFR-032).